Here is a 302-residue protein sequence, read N- to C-terminus: tRNA pseudouridine synthase B (302 aa).

Asp-38 serves as the catalytic Nucleophile.

This sequence belongs to the pseudouridine synthase TruB family. Type 1 subfamily.

The enzyme catalyses uridine(55) in tRNA = pseudouridine(55) in tRNA. Functionally, responsible for synthesis of pseudouridine from uracil-55 in the psi GC loop of transfer RNAs. The polypeptide is tRNA pseudouridine synthase B (Ligilactobacillus salivarius (strain UCC118) (Lactobacillus salivarius)).